The primary structure comprises 293 residues: Probable rRNA-processing protein EBP2 homolog (293 aa).

Over residues 1-37 (MSLEEDIVSDDEMNMIDEDDATDSEAESLSDSDTENE) the composition is skewed to acidic residues. Disordered regions lie at residues 1 to 45 (MSLE…LAEP) and 150 to 293 (IEES…RQKR). Positions 135–190 (HMEKVKSRLLHEKKQIEESEERRKARDNKRMAKEVQSQKMKERAKEKKDNIESVKK) form a coiled coil. Composition is skewed to basic and acidic residues over residues 150 to 167 (IEES…RMAK), 173 to 189 (KMKE…ESVK), and 247 to 256 (KKREFRDSKF). The span at 265–275 (SKQNTAETTND) shows a compositional bias: polar residues.

This sequence belongs to the EBP2 family. Interacts with NSN1.

Its subcellular location is the nucleus. It is found in the nucleolus. Its function is as follows. Required for the processing of the 27S pre-rRNA. Plays an important role in plant growth and senescence by modulating ribosome biogenesis in nucleolus. Associates with ribosomes. The polypeptide is Probable rRNA-processing protein EBP2 homolog (Arabidopsis thaliana (Mouse-ear cress)).